Here is a 70-residue protein sequence, read N- to C-terminus: Large ribosomal subunit protein uL29 (70 aa).

It belongs to the universal ribosomal protein uL29 family.

The sequence is that of Large ribosomal subunit protein uL29 from Prochlorococcus marinus (strain MIT 9211).